The chain runs to 386 residues: Citrate synthase (386 aa).

Residues histidine 266 and aspartate 322 contribute to the active site.

Belongs to the citrate synthase family.

The enzyme catalyses oxaloacetate + acetyl-CoA + H2O = citrate + CoA + H(+). It functions in the pathway carbohydrate metabolism; tricarboxylic acid cycle; isocitrate from oxaloacetate: step 1/2. This is Citrate synthase (gltA) from Acidithiobacillus ferridurans.